The following is a 352-amino-acid chain: Probable protein phosphatase 2C 42 (352 aa).

Residues 26–321 (AYASSAMQGY…DNMSVILVRF (296 aa)) form the PPM-type phosphatase domain. Mn(2+) is bound by residues D62, G63, D267, and D312. Positions 328-352 (RGARAATSSTSTGTVPSRHSKSISL) are disordered. Residues 329–341 (GARAATSSTSTGT) are compositionally biased toward low complexity.

It belongs to the PP2C family. The cofactor is Mg(2+). It depends on Mn(2+) as a cofactor.

It catalyses the reaction O-phospho-L-seryl-[protein] + H2O = L-seryl-[protein] + phosphate. The enzyme catalyses O-phospho-L-threonyl-[protein] + H2O = L-threonyl-[protein] + phosphate. This Oryza sativa subsp. japonica (Rice) protein is Probable protein phosphatase 2C 42.